The chain runs to 415 residues: Alditol oxidase (415 aa).

The FAD-binding PCMH-type domain occupies 12–179; the sequence is ITYTAKEVHR…TALTLDLEPA (168 aa). At histidine 46 the chain carries Pros-8alpha-FAD histidine. Residues serine 106, serine 111, glycine 114, 118–121, and valine 169 each bind FAD; that span reads TGTH. Xylitol is bound at residue serine 106. Xylitol is bound by residues glutamate 317, arginine 319, and threonine 342. Arginine 319 provides a ligand contact to FAD. FAD is bound at residue histidine 369. Lysine 372 is a binding site for xylitol.

The protein belongs to the oxygen-dependent FAD-linked oxidoreductase family. In terms of assembly, monomer. The cofactor is FAD.

It carries out the reaction an alditol + O2 = an aldose + H2O2. The enzyme catalyses xylitol + O2 = D-xylose + H2O2. It catalyses the reaction D-sorbitol + O2 = D-glucose + H2O2. Functionally, oxidase that performs selective oxidation of the terminal primary hydroxyl group of several alditols, with a reduction of O2 to H2O2. Shows highest activity on xylitol and D-sorbitol, and to a lesser extent, can also use galactitol, D-mannitol, and D-arabitol as substrates in vitro. Is not active on D-glucose, D-xylose, D-galactose, D-mannose, D-fructose, L-sorbose, L-fucose, myoinositol, glycerol, ethyl alcohol, and meso-erythritol. The protein is Alditol oxidase of Streptomyces sp. (strain IKD472 / FERM P-14339).